A 478-amino-acid chain; its full sequence is MLO-like protein 13 (478 aa).

The Extracellular segment spans residues 1 to 10; that stretch reads MAEARSGSLE. A helical transmembrane segment spans residues 11-31; that stretch reads YTPTWVVAFICFIIVLLSLLA. The Cytoplasmic portion of the chain corresponds to 32–60; sequence ERGLHHLGKCLKRRQQDALFEALQKLKEE. A helical membrane pass occupies residues 61 to 81; that stretch reads LMLLGFISLMLTVSQAAIRHI. The Extracellular segment spans residues 82–145; the sequence is CVPPALVNNM…VSVEALHQLH (64 aa). A helical transmembrane segment spans residues 146 to 166; sequence IFIFVLAVFHVIFCASTMVLG. Over 167–276 the chain is Cytoplasmic; sequence GARIQQWKHW…LRTLEIDFKK (110 aa). The next 2 membrane-spanning stretches (helical) occupy residues 277-297 and 298-318; these read VVSI…LNVG and GWNT…MVGA. The Cytoplasmic portion of the chain corresponds to 319–360; sequence KLEYIISSLALDVSEKRSRAEEAVITPSDELFWFHRPGIVLQ. A helical transmembrane segment spans residues 361 to 381; that stretch reads LIHFILFQNSFEIAFFFWILF. Over 382-400 the chain is Extracellular; it reads TYGIHSCIMEKLGYLIPRL. Residues 401–421 form a helical membrane-spanning segment; that stretch reads VMGVLVQVLCSYSTLPLYALV. The Cytoplasmic portion of the chain corresponds to 422–478; that stretch reads TQMGSKFKKGIFDNVVQSTLEGWLEDTRNRGESTSEAHRIEMQPTTPESYNVQSENP. The calmodulin-binding stretch occupies residues 435-456; it reads NVVQSTLEGWLEDTRNRGESTS. The span at 449 to 462 shows a compositional bias: basic and acidic residues; the sequence is RNRGESTSEAHRIE. The tract at residues 449 to 478 is disordered; that stretch reads RNRGESTSEAHRIEMQPTTPESYNVQSENP. Residues 464–478 show a composition bias toward polar residues; that stretch reads QPTTPESYNVQSENP.

This sequence belongs to the MLO family.

The protein localises to the membrane. Its function is as follows. May be involved in modulation of pathogen defense and leaf cell death. Activity seems to be regulated by Ca(2+)-dependent calmodulin binding and seems not to require heterotrimeric G proteins. This Arabidopsis thaliana (Mouse-ear cress) protein is MLO-like protein 13 (MLO13).